The sequence spans 244 residues: Mannose-binding protein C (244 aa).

The N-terminal stretch at 1–18 (MSLFTSFLLLCVLTAVYA) is a signal peptide. In terms of domain architecture, Collagen-like spans 38-96 (GLNGFPGKDGHDGAKGEKGEPGQGLRGLQGPPGKVGPAGPPGNPGSKGATGPKGDRGES). P43 is modified (4-hydroxyproline). The segment at 43–99 (PGKDGHDGAKGEKGEPGQGLRGLQGPPGKVGPAGPPGNPGSKGATGPKGDRGESVEF) is disordered. Positions 45 to 57 (KDGHDGAKGEKGE) are enriched in basic and acidic residues. 4 positions are modified to 4-hydroxyproline: P58, P69, P78, and P81. Residues 65 to 74 (LQGPPGKVGP) are compositionally biased toward low complexity. Positions 108-126 (IAALRSELRAMRKWVLLSM) form a coiled coil. The C-type lectin domain maps to 129-241 (NVGKKYFMSS…CSDSFLVVCE (113 aa)). 2 cysteine pairs are disulfide-bonded: C151-C240 and C218-C232.

Oligomeric complex of 3 or more homotrimers. Interacts with MASP1 and MASP2. Interacts with MEP1A and MEP1B and may inhibit their catalytic activity.

The protein resides in the secreted. Functionally, calcium-dependent lectin involved in innate immune defense. Binds mannose, fucose and N-acetylglucosamine on different microorganisms and activates the lectin complement pathway. Binds to late apoptotic cells, as well as to apoptotic blebs and to necrotic cells, but not to early apoptotic cells, facilitating their uptake by macrophages. The polypeptide is Mannose-binding protein C (Mbl2) (Rattus norvegicus (Rat)).